Reading from the N-terminus, the 122-residue chain is Ribosome-binding factor A (122 aa).

This sequence belongs to the RbfA family. As to quaternary structure, monomer. Binds 30S ribosomal subunits, but not 50S ribosomal subunits or 70S ribosomes.

The protein localises to the cytoplasm. Its function is as follows. One of several proteins that assist in the late maturation steps of the functional core of the 30S ribosomal subunit. Associates with free 30S ribosomal subunits (but not with 30S subunits that are part of 70S ribosomes or polysomes). Required for efficient processing of 16S rRNA. May interact with the 5'-terminal helix region of 16S rRNA. The polypeptide is Ribosome-binding factor A (Caldanaerobacter subterraneus subsp. tengcongensis (strain DSM 15242 / JCM 11007 / NBRC 100824 / MB4) (Thermoanaerobacter tengcongensis)).